Here is a 381-residue protein sequence, read N- to C-terminus: tRNA N6-adenosine threonylcarbamoyltransferase (381 aa).

Positions 114 and 118 each coordinate Fe cation. Residues V142–G146, D178, G191, D195, and N321 each bind substrate. D349 lines the Fe cation pocket.

Belongs to the KAE1 / TsaD family. Fe(2+) serves as cofactor.

It localises to the cytoplasm. It carries out the reaction L-threonylcarbamoyladenylate + adenosine(37) in tRNA = N(6)-L-threonylcarbamoyladenosine(37) in tRNA + AMP + H(+). Required for the formation of a threonylcarbamoyl group on adenosine at position 37 (t(6)A37) in tRNAs that read codons beginning with adenine. Is involved in the transfer of the threonylcarbamoyl moiety of threonylcarbamoyl-AMP (TC-AMP) to the N6 group of A37, together with TsaE and TsaB. TsaD likely plays a direct catalytic role in this reaction. This is tRNA N6-adenosine threonylcarbamoyltransferase from Koribacter versatilis (strain Ellin345).